Consider the following 590-residue polypeptide: Cytidine monophosphate-N-acetylneuraminic acid hydroxylase (590 aa).

A Rieske domain is found at 14 to 112 (LSPVEVANLK…VEMDENNGLL (99 aa)). 4 residues coordinate [2Fe-2S] cluster: Cys54, His56, Cys75, and His78.

The protein belongs to the CMP-Neu5Ac hydroxylase family. Requires [2Fe-2S] cluster as cofactor.

The protein resides in the cytoplasm. It catalyses the reaction CMP-N-acetyl-beta-neuraminate + 2 Fe(II)-[cytochrome b5] + O2 + 2 H(+) = CMP-N-glycoloyl-beta-neuraminate + 2 Fe(III)-[cytochrome b5] + H2O. Its pathway is amino-sugar metabolism; N-acetylneuraminate metabolism. Sialic acids are components of carbohydrate chains of glycoconjugates and are involved in cell-cell recognition and cell-pathogen interactions. Catalyzes the conversion of CMP-N-acetylneuraminic acid (CMP-Neu5Ac) into its hydroxylated derivative CMP-N-glycolylneuraminic acid (CMP-Neu5Gc), a sialic acid abundantly expressed at the surface of many cells. In Macaca mulatta (Rhesus macaque), this protein is Cytidine monophosphate-N-acetylneuraminic acid hydroxylase (CMAH).